The sequence spans 349 residues: Quinone oxidoreductase-like protein 2 (349 aa).

Position 35 is an N6-acetyllysine (Lys35). Position 200 is an N6-succinyllysine (Lys200).

It belongs to the zinc-containing alcohol dehydrogenase family. Quinone oxidoreductase subfamily.

The protein is Quinone oxidoreductase-like protein 2 of Bos taurus (Bovine).